The sequence spans 101 residues: MAKKSKIERNKQRVALVKRYAAKREALLSTANDESLPMEDRFEARLKLAELPRNANPTRIRNRCAMTGRPRAYYRKLGISRVALRDLGSRGMIPGLVKSSW.

Belongs to the universal ribosomal protein uS14 family. In terms of assembly, part of the 30S ribosomal subunit. Contacts proteins S3 and S10.

In terms of biological role, binds 16S rRNA, required for the assembly of 30S particles and may also be responsible for determining the conformation of the 16S rRNA at the A site. The sequence is that of Small ribosomal subunit protein uS14 from Methylobacterium sp. (strain 4-46).